The primary structure comprises 872 residues: uncharacterized protein (872 aa).

The stretch at Leu-496–Val-524 forms a coiled coil. 2 disordered regions span residues Arg-595–Gln-736 and Thr-844–Val-872. Polar residues-rich tracts occupy residues Gln-615 to Phe-659 and Pro-670 to Val-686. A compositionally biased stretch (low complexity) spans Gln-687 to Gln-736.

The protein resides in the virion. This is an uncharacterized protein from Acanthamoeba polyphaga mimivirus (APMV).